We begin with the raw amino-acid sequence, 241 residues long: ATP synthase subunit a (241 aa).

The next 5 helical transmembrane spans lie at 23–43, 83–103, 113–133, 188–208, and 209–229; these read VSFT…AAFF, YFPY…LGML, IAVT…IGFA, VLAG…FAVV, and LGVT…FTIL.

The protein belongs to the ATPase A chain family. In terms of assembly, F-type ATPases have 2 components, CF(1) - the catalytic core - and CF(0) - the membrane proton channel. CF(1) has five subunits: alpha(3), beta(3), gamma(1), delta(1), epsilon(1). CF(0) has four main subunits: a, b, b' and c.

The protein resides in the cell inner membrane. Key component of the proton channel; it plays a direct role in the translocation of protons across the membrane. This is ATP synthase subunit a from Rhodospirillum rubrum (strain ATCC 11170 / ATH 1.1.1 / DSM 467 / LMG 4362 / NCIMB 8255 / S1).